Consider the following 252-residue polypeptide: Imidazole glycerol phosphate synthase subunit HisF (252 aa).

Residues Asp11 and Asp130 contribute to the active site.

Belongs to the HisA/HisF family. Heterodimer of HisH and HisF.

It is found in the cytoplasm. It carries out the reaction 5-[(5-phospho-1-deoxy-D-ribulos-1-ylimino)methylamino]-1-(5-phospho-beta-D-ribosyl)imidazole-4-carboxamide + L-glutamine = D-erythro-1-(imidazol-4-yl)glycerol 3-phosphate + 5-amino-1-(5-phospho-beta-D-ribosyl)imidazole-4-carboxamide + L-glutamate + H(+). It participates in amino-acid biosynthesis; L-histidine biosynthesis; L-histidine from 5-phospho-alpha-D-ribose 1-diphosphate: step 5/9. Its function is as follows. IGPS catalyzes the conversion of PRFAR and glutamine to IGP, AICAR and glutamate. The HisF subunit catalyzes the cyclization activity that produces IGP and AICAR from PRFAR using the ammonia provided by the HisH subunit. In Lacticaseibacillus casei (strain BL23) (Lactobacillus casei), this protein is Imidazole glycerol phosphate synthase subunit HisF.